A 162-amino-acid polypeptide reads, in one-letter code: Flagellar assembly factor FliW (162 aa).

Belongs to the FliW family. Interacts with translational regulator CsrA and flagellin(s).

Its subcellular location is the cytoplasm. Acts as an anti-CsrA protein, binds CsrA and prevents it from repressing translation of its target genes, one of which is flagellin. Binds to flagellin and participates in the assembly of the flagellum. This Alkaliphilus metalliredigens (strain QYMF) protein is Flagellar assembly factor FliW.